Consider the following 272-residue polypeptide: 3-methyl-2-oxobutanoate hydroxymethyltransferase (272 aa).

Mg(2+) is bound by residues Asp-43 and Asp-82. 3-methyl-2-oxobutanoate contacts are provided by residues 43–44 (DS), Asp-82, and Lys-112. Glu-114 is a Mg(2+) binding site. Glu-179 functions as the Proton acceptor in the catalytic mechanism.

It belongs to the PanB family. In terms of assembly, homodecamer; pentamer of dimers. Mg(2+) serves as cofactor.

It localises to the cytoplasm. It carries out the reaction 3-methyl-2-oxobutanoate + (6R)-5,10-methylene-5,6,7,8-tetrahydrofolate + H2O = 2-dehydropantoate + (6S)-5,6,7,8-tetrahydrofolate. It functions in the pathway cofactor biosynthesis; (R)-pantothenate biosynthesis; (R)-pantoate from 3-methyl-2-oxobutanoate: step 1/2. Its function is as follows. Catalyzes the reversible reaction in which hydroxymethyl group from 5,10-methylenetetrahydrofolate is transferred onto alpha-ketoisovalerate to form ketopantoate. The chain is 3-methyl-2-oxobutanoate hydroxymethyltransferase from Staphylococcus aureus (strain JH1).